Consider the following 337-residue polypeptide: D-alanine--D-alanine ligase (337 aa).

Positions 124–330 (KMWFSALGIP…FTEYLSLVIN (207 aa)) constitute an ATP-grasp domain. Position 154–209 (154–209 (ALAQWGSIFVKAASQGSSVGCYKVDDSAKVAGVLKDAFGYAPYVIVEKTIKARELE)) interacts with ATP. Mg(2+) is bound by residues Asp284, Glu297, and Asn299.

The protein belongs to the D-alanine--D-alanine ligase family. Mg(2+) serves as cofactor. Requires Mn(2+) as cofactor.

It is found in the cytoplasm. It catalyses the reaction 2 D-alanine + ATP = D-alanyl-D-alanine + ADP + phosphate + H(+). Its pathway is cell wall biogenesis; peptidoglycan biosynthesis. Functionally, cell wall formation. This Shewanella baltica (strain OS223) protein is D-alanine--D-alanine ligase.